A 231-amino-acid polypeptide reads, in one-letter code: Ribose-5-phosphate isomerase A (231 aa).

Substrate-binding positions include 28–31, 83–86, and 96–99; these read TGST, DGAD, and KGGG. Residue Glu-105 is the Proton acceptor of the active site. Lys-123 serves as a coordination point for substrate.

Belongs to the ribose 5-phosphate isomerase family. As to quaternary structure, homodimer.

It carries out the reaction aldehydo-D-ribose 5-phosphate = D-ribulose 5-phosphate. Its pathway is carbohydrate degradation; pentose phosphate pathway; D-ribose 5-phosphate from D-ribulose 5-phosphate (non-oxidative stage): step 1/1. Catalyzes the reversible conversion of ribose-5-phosphate to ribulose 5-phosphate. The chain is Ribose-5-phosphate isomerase A from Rhizobium meliloti (strain 1021) (Ensifer meliloti).